Reading from the N-terminus, the 120-residue chain is Large ribosomal subunit protein bL17 (120 aa).

This sequence belongs to the bacterial ribosomal protein bL17 family. In terms of assembly, part of the 50S ribosomal subunit. Contacts protein L32.

The polypeptide is Large ribosomal subunit protein bL17 (Anoxybacillus flavithermus (strain DSM 21510 / WK1)).